The following is a 243-amino-acid chain: Carboxy-S-adenosyl-L-methionine synthase (243 aa).

S-adenosyl-L-methionine is bound by residues tyrosine 39, 64 to 66 (GCS), 90 to 91 (DN), 118 to 119 (DL), asparagine 133, and arginine 200.

The protein belongs to the class I-like SAM-binding methyltransferase superfamily. Cx-SAM synthase family. As to quaternary structure, homodimer.

It catalyses the reaction prephenate + S-adenosyl-L-methionine = carboxy-S-adenosyl-L-methionine + 3-phenylpyruvate + H2O. In terms of biological role, catalyzes the conversion of S-adenosyl-L-methionine (SAM) to carboxy-S-adenosyl-L-methionine (Cx-SAM). The polypeptide is Carboxy-S-adenosyl-L-methionine synthase (Idiomarina loihiensis (strain ATCC BAA-735 / DSM 15497 / L2-TR)).